The sequence spans 123 residues: MDQKKDPSNNLTERRVSKVQRPNKKKVRNQVESLSRNLERNKEGQLLQTVSKGHLKADSGHSLGREKENGELGIRSIFYDKDWNPRGTAPSHYRNIPYNPATFKRRTEVQARLGNLENIKIPK.

Residues 1–16 (MDQKKDPSNNLTERRV) show a composition bias toward basic and acidic residues. The tract at residues 1–30 (MDQKKDPSNNLTERRVSKVQRPNKKKVRNQ) is disordered. A compositionally biased stretch (basic residues) spans 17–28 (SKVQRPNKKKVR).

Belongs to the AIM4 family. As to quaternary structure, may interact with the nuclear pore complex.

It is found in the cytoplasm. In Saccharomyces cerevisiae (strain YJM789) (Baker's yeast), this protein is Altered inheritance of mitochondria protein 4 (AIM4).